The chain runs to 1030 residues: ADAMTS-like protein 4 (1030 aa).

An N-terminal signal peptide occupies residues 1–24 (MELWLGRLWLYVMLLLLLLQLCQD). The 45-residue stretch at 47 to 91 (GPWGRWASCSQPCGVGVQRRSRTCELHPALSLPPRPPRHPEAPQP) folds into the TSP type-1 1 domain. 2 disordered regions span residues 73–150 (HPAL…KPGM) and 168–306 (LAHK…LPLT). Polar residues-rich tracts occupy residues 176-186 (KDSSTAEETLP), 211-237 (QSRSPSAETPRSGTAQTEVPSRTSSAP), and 245-257 (PTSSFRDSRSFQG). Residues asparagine 451 and asparagine 731 are each glycosylated (N-linked (GlcNAc...) asparagine). TSP type-1 domains are found at residues 681–740 (CPPY…QLRL), 741–800 (CGHW…GPCT), 803–865 (WFYS…GPCE), 866–925 (KTWR…QGQA), and 926–982 (CEDQ…QPCN). The region spanning 985-1022 (PDDQCKDSSPHCPLVVQARLCVYPYYTATCCRSCAHVL) is the PLAC domain.

As to quaternary structure, interacts with CTSB. Interacts with FBN1. Post-translationally, glycosylated. Can be O-fucosylated by POFUT2 on a serine or a threonine residue found within the consensus sequence C1-X(2)-(S/T)-C2-G of the TSP type-1 repeat domains where C1 and C2 are the first and second cysteine residue of the repeat, respectively. Fucosylated repeats can then be further glycosylated by the addition of a beta-1,3-glucose residue by the glucosyltransferase, B3GALTL. Fucosylation mediates the efficient secretion of ADAMTS family members. Can also be C-glycosylated with one or two mannose molecules on tryptophan residues within the consensus sequence W-X-X-W of the TPRs, and N-glycosylated. These other glycosylations can also facilitate secretion.

The protein localises to the secreted. It localises to the extracellular space. Its subcellular location is the extracellular matrix. In terms of biological role, positive regulation of apoptosis. May facilitate FBN1 microfibril biogenesis. This Rattus norvegicus (Rat) protein is ADAMTS-like protein 4.